A 465-amino-acid polypeptide reads, in one-letter code: Cysteine--tRNA ligase (465 aa).

Residue Cys27 participates in Zn(2+) binding. A 'HIGH' region motif is present at residues Pro29 to His39. The Zn(2+) site is built by Cys207, His237, and Glu241. Residues Lys269–Ser273 carry the 'KMSKS' region motif. ATP is bound at residue Lys272.

The protein belongs to the class-I aminoacyl-tRNA synthetase family. In terms of assembly, monomer. Zn(2+) serves as cofactor.

It is found in the cytoplasm. It carries out the reaction tRNA(Cys) + L-cysteine + ATP = L-cysteinyl-tRNA(Cys) + AMP + diphosphate. This is Cysteine--tRNA ligase from Helicobacter pylori (strain G27).